The primary structure comprises 257 residues: Snake venom serine protease KN1 (257 aa).

Positions 1–18 (MVLIRVLANLLILQLSYA) are cleaved as a signal peptide. Positions 19–24 (QKSSEL) are excised as a propeptide. In terms of domain architecture, Peptidase S1 spans 25–248 (VVGGHPCNIN…HLDWIKSIIA (224 aa)). 5 disulfides stabilise this stretch: Cys-31-Cys-162, Cys-49-Cys-65, Cys-141-Cys-209, Cys-173-Cys-188, and Cys-199-Cys-224. The active-site Charge relay system is His-64. A glycan (N-linked (GlcNAc...) asparagine) is linked at Asn-102. The Charge relay system role is filled by Asp-109. Asn-120 and Asn-121 each carry an N-linked (GlcNAc...) asparagine glycan. Catalysis depends on Ser-203, which acts as the Charge relay system.

The protein belongs to the peptidase S1 family. Snake venom subfamily. Monomer. As to expression, expressed by the venom gland.

It localises to the secreted. In terms of biological role, snake venom serine protease that may act in the hemostasis system of the prey. The sequence is that of Snake venom serine protease KN1 from Trimeresurus stejnegeri (Chinese green tree viper).